The following is a 132-amino-acid chain: MADPGHVFRRAFSWLPSQFASQSDAPVGAPRQFGSTEHLSVEAIAAFVDGELRMSAHLRAAHHLSLCPECAAEVDAQSQARTALRESCPIAIPNSLLGMLSQIPHRTPEVTPDVSEQAKFADDPTRGRRKRR.

At Thr-36 the chain carries Phosphothreonine; by PknB. Residues His-63, Cys-67, and Cys-70 each coordinate Zn(2+). The tract at residues 106–132 (RTPEVTPDVSEQAKFADDPTRGRRKRR) is disordered.

The protein belongs to the zinc-associated anti-sigma factor (ZAS) superfamily. Interacts with ECF RNA polymerase sigma factor SigE, interaction is abrogated by treatment of cells with H(2)O(2), detergent or vancomycin (the latter 2 cause surface stress). This probably inhibits the interaction of SigE with the RNA polymerase catalytic core. Requires Zn(2+) as cofactor. Phosphorylated by PknB on Thr-36; can be dephosphorylated (at least in vitro) by PstP. Phosphorylation is the signal for subsequent degradation by the ClpC1-ClpP2 complex. Post-translationally, degraded following vancomycin treatment (surface stress) by a ClpC1-ClpP2 complex.

It localises to the cytoplasm. In terms of biological role, an anti-sigma factor for extracytoplasmic function (ECF) sigma factor SigE. ECF sigma factors are held in an inactive form by an anti-sigma factor. The sequence is that of Anti-sigma-E factor RseA (rseA) from Mycolicibacterium smegmatis (strain ATCC 700084 / mc(2)155) (Mycobacterium smegmatis).